The primary structure comprises 270 residues: uncharacterized protein (270 aa).

A signal peptide spans 1 to 22; that stretch reads MGYIKRMALYMSVFLLIIFIVG. Cys23 carries N-palmitoyl cysteine lipidation. A lipid anchor (S-diacylglycerol cysteine) is attached at Cys23.

This sequence belongs to the staphylococcal tandem lipoprotein family.

Its subcellular location is the cell membrane. This is an uncharacterized protein from Staphylococcus aureus (strain COL).